A 1068-amino-acid chain; its full sequence is TSC22 domain family protein 1 (1068 aa).

Positions 1 to 98 (MHQPPESTAA…SQAQLQAQPL (98 aa)) are required for interaction with TGFBR1 and promotion of TGF-beta signaling. Disordered stretches follow at residues 23-110 (AHPA…KKSG), 125-288 (ISSN…SPAS), and 602-623 (YSQAAPPVQTPLPGAPPPQQLQ). Over residues 36–55 (GSASALNAAGTGVGSSATSS) the composition is skewed to low complexity. Over residues 58-70 (FPPPSLLQPPPPA) the composition is skewed to pro residues. Residues 84 to 100 (SLNLLSQAQLQAQPLAP) are compositionally biased toward low complexity. Acidic residues predominate over residues 133–142 (EDTESYDDLD). Basic residues predominate over residues 216-240 (HPHHLHHHHHIHHGHHLQHGHHHPS). The span at 241-250 (HVAVASASIP) shows a compositional bias: low complexity. The segment covering 261–271 (KLSTTGSSDSI) has biased composition (polar residues). Position 263 is a phosphoserine (Ser-263). Residues 272-288 (TPVAPTSAVSSSGSPAS) show a composition bias toward low complexity. Residues 609 to 620 (VQTPLPGAPPPQ) show a composition bias toward pro residues. The interval 1000-1021 (VLKEQIKELIEKNSQLEQENNL) is leucine-zipper. A disordered region spans residues 1032 to 1068 (AQFQAQLQTGSPPATTQPQGTTQPPAQPASQGSGPTA). Residues 1039-1068 (QTGSPPATTQPQGTTQPPAQPASQGSGPTA) show a composition bias toward low complexity.

This sequence belongs to the TSC-22/Dip/Bun family. Forms homodimers. Forms heterodimers. Component of a complex composed of TSC22D1 (via N-terminus), TGFBR1 and TGFBR2; the interaction between TSC22D1 and TGFBR1 is inhibited by SMAD7 and promoted by TGFB1. Interacts with SMAD7; the interaction requires TGF-beta and the interaction is inhibited by TGFBR1. Interacts with TPT1/fortilin; interaction results in the destabilization of TSC22D1 protein and prevents TSC22D1-mediated apoptosis. Interacts with SMAD4 (via N-terminus). Interacts with ACVRL1/ALK1, ACVR1/ALK2, BMPR1A/ALK3, ACVR1B/ALK4, BMPR1B/ALK6, ACVR2A/ACTRII, and BMPR2. Interacts with SMAD6. Interacts with TFE3; the interaction is enhanced in the presence of TGF-beta. In terms of assembly, forms a heterodimer with TSC22D4/THG1. As to quaternary structure, forms a heterodimer with TSC22D4/THG1. Interacts with histone H1-2. Interacts with GNL3.

It is found in the cytoplasm. The protein localises to the nucleus. It localises to the cell membrane. Its subcellular location is the mitochondrion. Transcriptional repressor. Acts on the C-type natriuretic peptide (CNP) promoter. Acts to promote CASP3-mediated apoptosis. Positively regulates TGF-beta signaling by interacting with SMAD7 which inhibits binding of SMAD7 to TGFBR1, preventing recruitment of SMURF ubiquitin ligases to TGFBR1 and inhibiting SMURF-mediated ubiquitination and degradation of TGFBR1. Contributes to enhancement of TGF-beta signaling by binding to and modulating the transcription activator activity of SMAD4. Promotes TGF-beta-induced transcription of COL1A2; via its interaction with TFE3 at E-boxes in the gene proximal promoter. Plays a role in the repression of hematopoietic precursor cell growth. Promotes IL2 deprivation-induced apoptosis in T-lymphocytes, via repression of TSC22D3/GILZ transcription and activation of the caspase cascade. Functionally, may act to negatively regulate TGFB3 signaling and thereby inhibit cell death in mammary gland cells. Its function is as follows. Positively regulates cell death in response to TGFB3 during mammary gland involution. The sequence is that of TSC22 domain family protein 1 from Macaca fascicularis (Crab-eating macaque).